The following is a 115-amino-acid chain: Large ribosomal subunit protein bL19 (115 aa).

This sequence belongs to the bacterial ribosomal protein bL19 family.

Functionally, this protein is located at the 30S-50S ribosomal subunit interface and may play a role in the structure and function of the aminoacyl-tRNA binding site. The polypeptide is Large ribosomal subunit protein bL19 (Bacillus pumilus (strain SAFR-032)).